The following is a 367-amino-acid chain: Viral cathepsin (367 aa).

A signal peptide spans 1 to 25 (MRKYHSNIMHKIITFVSLLWTFVVC). The propeptide at 26 to 156 (DEISLHTSSS…IVKGAPDIRL (131 aa)) is activation peptide. N-linked (GlcNAc...) asparagine; by host glycosylation is found at N103 and N135. Intrachain disulfides connect C177/C218, C211/C251, and C306/C354. The active site involves C180. Active-site residues include H313 and N333.

The protein belongs to the peptidase C1 family. In terms of processing, synthesized as an inactive proenzyme and activated by proteolytic removal of the inhibitory propeptide.

It catalyses the reaction Endopeptidase of broad specificity, hydrolyzing substrates of both cathepsin L and cathepsin B.. In terms of biological role, cysteine protease that plays an essential role in host liquefaction to facilitate horizontal transmission of the virus. May participate in the degradation of foreign protein expressed by the baculovirus system. This is Viral cathepsin (VCATH) from Lepidoptera (butterflies and moths).